Consider the following 186-residue polypeptide: Histone deacetylase complex subunit SAP25 (186 aa).

2 disordered regions span residues 1–25 (MSPLPLRDPSHQANAGPRLVEPSCG) and 148–186 (EQTPNCVASSLPSTSCPDPVSVSEDPGPSGDQSCSGTDT). Composition is skewed to polar residues over residues 148-163 (EQTPNCVASSLPSTSC) and 177-186 (GDQSCSGTDT).

In terms of assembly, may be a component of the mSIN3A corepressor complex. Interacts with SIN3A and HDAC2. As to expression, widely expressed.

Its subcellular location is the nucleus. It localises to the cytoplasm. In terms of biological role, involved in the transcriptional repression mediated by the mSIN3A but not the N-CoR corepressor complex. This Mus musculus (Mouse) protein is Histone deacetylase complex subunit SAP25 (Sap25).